The following is a 272-amino-acid chain: Putative phosphoenolpyruvate synthase regulatory protein (272 aa).

151–158 is an ADP binding site; sequence GVSRSGKT.

It belongs to the pyruvate, phosphate/water dikinase regulatory protein family. PSRP subfamily.

It carries out the reaction [pyruvate, water dikinase] + ADP = [pyruvate, water dikinase]-phosphate + AMP + H(+). It catalyses the reaction [pyruvate, water dikinase]-phosphate + phosphate + H(+) = [pyruvate, water dikinase] + diphosphate. Bifunctional serine/threonine kinase and phosphorylase involved in the regulation of the phosphoenolpyruvate synthase (PEPS) by catalyzing its phosphorylation/dephosphorylation. This chain is Putative phosphoenolpyruvate synthase regulatory protein, found in Desulfotalea psychrophila (strain LSv54 / DSM 12343).